We begin with the raw amino-acid sequence, 1218 residues long: Coatomer subunit alpha-1 (1218 aa).

9 WD repeats span residues 7-48, 49-88, 91-132, 133-172, 202-241, 246-285, 288-326, 363-404, and 450-489; these read TKSN…DRFD, EHDGPVRGVHFHATQPLFVSGGDDYKIKVWNYKTHRCLFT, GHLD…AVLT, GHNHYVMCASFHPKEDLVVSASLDQTVRVWDIGALRKKTV, GHDRGVNWASFHPTLPLIVSGADDRQVKLWRMNDTKAWEV, GHMNNVSCVMFHAKQDIIVSNSEDKSIRIWDATKRTGIQT, REHDRFWILSAHPEMNLLAAGHDSGMIVFKLERERPAFS, SLNQ…AGRA, and PLPIATDAIYYAGTGNLLCKAEDRVTIFDLQQRLILGELQ. The interval 857–882 is disordered; the sequence is NGGDGFDAEEGEANEEDGEEGGWDLE. A compositionally biased stretch (acidic residues) spans 862 to 882; sequence FDAEEGEANEEDGEEGGWDLE.

Oligomeric complex that consists of at least the alpha, beta, beta', gamma, delta, epsilon and zeta subunits.

The protein resides in the cytoplasm. Its subcellular location is the golgi apparatus membrane. It is found in the cytoplasmic vesicle. The protein localises to the COPI-coated vesicle membrane. In terms of biological role, the coatomer is a cytosolic protein complex that binds to dilysine motifs and reversibly associates with Golgi non-clathrin-coated vesicles, which further mediate biosynthetic protein transport from the ER, via the Golgi up to the trans Golgi network. Coatomer complex is required for budding from Golgi membranes, and is essential for the retrograde Golgi-to-ER transport of dilysine-tagged proteins. The polypeptide is Coatomer subunit alpha-1 (Oryza sativa subsp. japonica (Rice)).